We begin with the raw amino-acid sequence, 420 residues long: Transcriptional adapter 2-beta (420 aa).

A ZZ-type zinc finger spans residues 4–59; that stretch reads LSKKYCVYCLADVTSLRLRCTECQDIELCTDCFSAGAEIGNHRRWHGYQLVDGGRF. Positions 9, 12, 23, 26, 32, 35, 45, and 49 each coordinate Zn(2+). In terms of domain architecture, SANT spans 65–118; that stretch reads EAEGGWTSREEQLLLDAIEQFGFGNWEDMAAHVGASRTPTEVMEHYVTMYIHGN. The disordered stretch occupies residues 303 to 333; the sequence is EESAEYEAARHKREKRKENKNIANSKRGRED.

Its subcellular location is the nucleus. In terms of biological role, transcriptional coactivator. In Xenopus laevis (African clawed frog), this protein is Transcriptional adapter 2-beta (tada2b).